We begin with the raw amino-acid sequence, 335 residues long: uncharacterized protein (335 aa).

The protein belongs to the glycosyltransferase group 1 family. Glycosyltransferase 4 subfamily.

This is an uncharacterized protein from Sulfolobus islandicus rod-shaped virus 1 (SIRV-1).